The chain runs to 453 residues: Ribulose bisphosphate carboxylase large chain (453 aa).

A propeptide spanning residues 1–2 (MS) is cleaved from the precursor. Residue P3 is modified to N-acetylproline. Residue K14 is modified to N6,N6,N6-trimethyllysine. N123 and T173 together coordinate substrate. K175 acts as the Proton acceptor in catalysis. Substrate is bound at residue K177. 3 residues coordinate Mg(2+): K201, D203, and E204. K201 bears the N6-carboxylysine mark. Residue H294 is the Proton acceptor of the active site. Substrate contacts are provided by R295, H327, and S379.

This sequence belongs to the RuBisCO large chain family. Type I subfamily. Heterohexadecamer of 8 large chains and 8 small chains; disulfide-linked. The disulfide link is formed within the large subunit homodimers. Requires Mg(2+) as cofactor. In terms of processing, the disulfide bond which can form in the large chain dimeric partners within the hexadecamer appears to be associated with oxidative stress and protein turnover.

Its subcellular location is the plastid. It is found in the chloroplast. It carries out the reaction 2 (2R)-3-phosphoglycerate + 2 H(+) = D-ribulose 1,5-bisphosphate + CO2 + H2O. The catalysed reaction is D-ribulose 1,5-bisphosphate + O2 = 2-phosphoglycolate + (2R)-3-phosphoglycerate + 2 H(+). Functionally, ruBisCO catalyzes two reactions: the carboxylation of D-ribulose 1,5-bisphosphate, the primary event in carbon dioxide fixation, as well as the oxidative fragmentation of the pentose substrate in the photorespiration process. Both reactions occur simultaneously and in competition at the same active site. This chain is Ribulose bisphosphate carboxylase large chain, found in Galium elongatum (Great marsh bedstraw).